Reading from the N-terminus, the 281-residue chain is Elongation factor Ts (281 aa).

The interval 80–83 (TDFV) is involved in Mg(2+) ion dislocation from EF-Tu.

Belongs to the EF-Ts family.

The protein localises to the cytoplasm. Functionally, associates with the EF-Tu.GDP complex and induces the exchange of GDP to GTP. It remains bound to the aminoacyl-tRNA.EF-Tu.GTP complex up to the GTP hydrolysis stage on the ribosome. This Aliivibrio fischeri (strain MJ11) (Vibrio fischeri) protein is Elongation factor Ts.